Consider the following 545-residue polypeptide: CTP synthase (545 aa).

An amidoligase domain region spans residues 1-266 (MATNYIFVTG…DDIVTKRFNL (266 aa)). Ser-14 lines the CTP pocket. Ser-14 serves as a coordination point for UTP. Residues 15–20 (SLGKGI) and Asp-72 each bind ATP. Residues Asp-72 and Glu-140 each contribute to the Mg(2+) site. CTP contacts are provided by residues 147 to 149 (DIE), 187 to 192 (KTKPTQ), and Lys-223. Residues 187-192 (KTKPTQ) and Lys-223 contribute to the UTP site. An ATP-binding site is contributed by 239 to 241 (RDV). A Glutamine amidotransferase type-1 domain is found at 291-542 (TVGFVGKYVE…IEAAGEFHKE (252 aa)). Gly-352 serves as a coordination point for L-glutamine. The active-site Nucleophile; for glutamine hydrolysis is Cys-379. Residues 380 to 383 (LGMQ), Glu-403, and Arg-470 contribute to the L-glutamine site. Active-site residues include His-515 and Glu-517.

This sequence belongs to the CTP synthase family. In terms of assembly, homotetramer.

It catalyses the reaction UTP + L-glutamine + ATP + H2O = CTP + L-glutamate + ADP + phosphate + 2 H(+). The catalysed reaction is L-glutamine + H2O = L-glutamate + NH4(+). It carries out the reaction UTP + NH4(+) + ATP = CTP + ADP + phosphate + 2 H(+). The protein operates within pyrimidine metabolism; CTP biosynthesis via de novo pathway; CTP from UDP: step 2/2. With respect to regulation, allosterically activated by GTP, when glutamine is the substrate; GTP has no effect on the reaction when ammonia is the substrate. The allosteric effector GTP functions by stabilizing the protein conformation that binds the tetrahedral intermediate(s) formed during glutamine hydrolysis. Inhibited by the product CTP, via allosteric rather than competitive inhibition. In terms of biological role, catalyzes the ATP-dependent amination of UTP to CTP with either L-glutamine or ammonia as the source of nitrogen. Regulates intracellular CTP levels through interactions with the four ribonucleotide triphosphates. This Idiomarina loihiensis (strain ATCC BAA-735 / DSM 15497 / L2-TR) protein is CTP synthase.